The chain runs to 321 residues: Ribosomal RNA small subunit methyltransferase H (321 aa).

S-adenosyl-L-methionine-binding positions include 40-42 (GGH), Asp60, Phe84, Asp106, and Gln113.

It belongs to the methyltransferase superfamily. RsmH family.

The protein resides in the cytoplasm. The enzyme catalyses cytidine(1402) in 16S rRNA + S-adenosyl-L-methionine = N(4)-methylcytidine(1402) in 16S rRNA + S-adenosyl-L-homocysteine + H(+). In terms of biological role, specifically methylates the N4 position of cytidine in position 1402 (C1402) of 16S rRNA. This chain is Ribosomal RNA small subunit methyltransferase H, found in Histophilus somni (strain 2336) (Haemophilus somnus).